A 121-amino-acid chain; its full sequence is Fluoride-specific ion channel FluC 1 (121 aa).

4 helical membrane passes run 3–23 (YLYI…LSML), 29–49 (IPLG…SIGA), 67–87 (TGLL…VTLF), and 92–112 (FILF…SCYL). Residues glycine 71 and threonine 74 each contribute to the Na(+) site.

It belongs to the fluoride channel Fluc/FEX (TC 1.A.43) family.

It is found in the cell membrane. The catalysed reaction is fluoride(in) = fluoride(out). Its activity is regulated as follows. Na(+) is not transported, but it plays an essential structural role and its presence is essential for fluoride channel function. In terms of biological role, fluoride-specific ion channel. Important for reducing fluoride concentration in the cell, thus reducing its toxicity. This is Fluoride-specific ion channel FluC 1 from Staphylococcus epidermidis (strain ATCC 35984 / DSM 28319 / BCRC 17069 / CCUG 31568 / BM 3577 / RP62A).